A 218-amino-acid polypeptide reads, in one-letter code: Orotate phosphoribosyltransferase (218 aa).

Lys26 is a binding site for 5-phospho-alpha-D-ribose 1-diphosphate. 34–35 (FF) contacts orotate. 5-phospho-alpha-D-ribose 1-diphosphate contacts are provided by residues 72 to 73 (YK), Arg99, Lys100, Lys103, His105, and 124 to 132 (DDVITAGTA). Orotate-binding residues include Thr128 and Arg156.

Belongs to the purine/pyrimidine phosphoribosyltransferase family. PyrE subfamily. Homodimer. The cofactor is Mg(2+).

It carries out the reaction orotidine 5'-phosphate + diphosphate = orotate + 5-phospho-alpha-D-ribose 1-diphosphate. The protein operates within pyrimidine metabolism; UMP biosynthesis via de novo pathway; UMP from orotate: step 1/2. Catalyzes the transfer of a ribosyl phosphate group from 5-phosphoribose 1-diphosphate to orotate, leading to the formation of orotidine monophosphate (OMP). The sequence is that of Orotate phosphoribosyltransferase from Hamiltonella defensa subsp. Acyrthosiphon pisum (strain 5AT).